The following is a 177-amino-acid chain: Inorganic pyrophosphatase (177 aa).

Residues lysine 31, arginine 45, and tyrosine 57 each coordinate substrate. Mg(2+)-binding residues include aspartate 67, aspartate 72, and aspartate 104. A substrate-binding site is contributed by tyrosine 142.

It belongs to the PPase family. In terms of assembly, homohexamer. Mg(2+) serves as cofactor.

It localises to the cytoplasm. It catalyses the reaction diphosphate + H2O = 2 phosphate + H(+). Catalyzes the hydrolysis of inorganic pyrophosphate (PPi) forming two phosphate ions. The polypeptide is Inorganic pyrophosphatase (Neisseria meningitidis serogroup A / serotype 4A (strain DSM 15465 / Z2491)).